Here is a 135-residue protein sequence, read N- to C-terminus: Ribosome-binding factor A (135 aa).

Belongs to the RbfA family. As to quaternary structure, monomer. Binds 30S ribosomal subunits, but not 50S ribosomal subunits or 70S ribosomes.

It is found in the cytoplasm. In terms of biological role, one of several proteins that assist in the late maturation steps of the functional core of the 30S ribosomal subunit. Associates with free 30S ribosomal subunits (but not with 30S subunits that are part of 70S ribosomes or polysomes). Required for efficient processing of 16S rRNA. May interact with the 5'-terminal helix region of 16S rRNA. The protein is Ribosome-binding factor A of Caldicellulosiruptor saccharolyticus (strain ATCC 43494 / DSM 8903 / Tp8T 6331).